The sequence spans 358 residues: Peroxidase 12 (358 aa).

An N-terminal signal peptide occupies residues 1-31 (MTKAYSTRVLTFLILISLMAVTLNLFPTVEA). Cystine bridges form between cysteine 53–cysteine 134, cysteine 86–cysteine 91, cysteine 140–cysteine 335, and cysteine 220–cysteine 247. Histidine 84 (proton acceptor) is an active-site residue. Ca(2+) is bound by residues aspartate 85, valine 88, glycine 90, glutamate 92, and serine 94. Proline 183 provides a ligand contact to substrate. N-linked (GlcNAc...) asparagine glycans are attached at residues asparagine 188 and asparagine 202. Histidine 213 contributes to the heme b binding site. Threonine 214 is a Ca(2+) binding site. Residue asparagine 251 is glycosylated (N-linked (GlcNAc...) asparagine). Residues aspartate 259, serine 262, and aspartate 267 each contribute to the Ca(2+) site. Asparagine 334 carries N-linked (GlcNAc...) asparagine glycosylation.

It belongs to the peroxidase family. Classical plant (class III) peroxidase subfamily. Heme b serves as cofactor. Ca(2+) is required as a cofactor. In terms of tissue distribution, expressed in roots and leaves.

Its subcellular location is the secreted. The protein localises to the vacuole. It carries out the reaction 2 a phenolic donor + H2O2 = 2 a phenolic radical donor + 2 H2O. Removal of H(2)O(2), oxidation of toxic reductants, biosynthesis and degradation of lignin, suberization, auxin catabolism, response to environmental stresses such as wounding, pathogen attack and oxidative stress. These functions might be dependent on each isozyme/isoform in each plant tissue. Functionally, exhibits a Ca(2+)-pectate binding affinity which could be interpreted in vivo as a specificity to interact with the pectic structure of the cell wall. The sequence is that of Peroxidase 12 (PER12) from Arabidopsis thaliana (Mouse-ear cress).